A 109-amino-acid chain; its full sequence is U4-lycotoxin-Ls1b (109 aa).

The first 22 residues, 1 to 22, serve as a signal peptide directing secretion; it reads MKVLVLFSVLFLTLFSYSSTEA. Residues 23–44 constitute a propeptide that is removed on maturation; it reads IDEFDSDAEDDMLSLMANEQVR. The knottin domain stretch occupies residues 45–88; the sequence is AKACTPRLHDCSHDRHSCCRGELSKDVCYCFYPEGEDKTEVCSC. 4 disulfide bridges follow: Cys48–Cys63, Cys55–Cys72, Cys62–Cys88, and Cys74–Cys86. Residues 89-108 are linear cationic cytotoxin domain; it reads QQPKSHKYIEKVVDKAKTVV.

The protein belongs to the neurotoxin 19 (CSTX) family. 05 (U4-Lctx) subfamily. Expressed by the venom gland.

The protein localises to the secreted. Enhances the high-affinity desensitization of human P2RX3 purinoceptors. This Lycosa singoriensis (Wolf spider) protein is U4-lycotoxin-Ls1b.